The following is a 242-amino-acid chain: Endoglucanase (242 aa).

The N-terminal stretch at 1 to 21 (MQVIVLPLVFLATFATSGSLA) is a signal peptide. Aspartate 47 functions as the Nucleophile in the catalytic mechanism. N-linked (GlcNAc...) asparagine glycans are attached at residues asparagine 79, asparagine 103, and asparagine 217.

It belongs to the glycosyl hydrolase 45 (cellulase K) family. Expressed in larval carcasses and gut, and adult gut.

It is found in the secreted. The catalysed reaction is Endohydrolysis of (1-&gt;4)-beta-D-glucosidic linkages in cellulose, lichenin and cereal beta-D-glucans.. The polypeptide is Endoglucanase (Phaedon cochleariae (Mustard beetle)).